The primary structure comprises 338 residues: Aspartate carbamoyltransferase catalytic subunit (338 aa).

R72 and T73 together coordinate carbamoyl phosphate. K100 contacts L-aspartate. Carbamoyl phosphate-binding residues include R122, H152, and Q155. R186 and R243 together coordinate L-aspartate. Carbamoyl phosphate is bound by residues G284 and P285.

This sequence belongs to the aspartate/ornithine carbamoyltransferase superfamily. ATCase family. In terms of assembly, heterododecamer (2C3:3R2) of six catalytic PyrB chains organized as two trimers (C3), and six regulatory PyrI chains organized as three dimers (R2).

It carries out the reaction carbamoyl phosphate + L-aspartate = N-carbamoyl-L-aspartate + phosphate + H(+). Its pathway is pyrimidine metabolism; UMP biosynthesis via de novo pathway; (S)-dihydroorotate from bicarbonate: step 2/3. In terms of biological role, catalyzes the condensation of carbamoyl phosphate and aspartate to form carbamoyl aspartate and inorganic phosphate, the committed step in the de novo pyrimidine nucleotide biosynthesis pathway. This is Aspartate carbamoyltransferase catalytic subunit from Acinetobacter baumannii (strain AB307-0294).